The sequence spans 208 residues: 3-demethoxyubiquinol 3-hydroxylase (208 aa).

Fe cation is bound by residues glutamate 57, glutamate 87, histidine 90, glutamate 139, glutamate 171, and histidine 174.

This sequence belongs to the COQ7 family. Fe cation is required as a cofactor.

The protein resides in the cell membrane. The enzyme catalyses a 5-methoxy-2-methyl-3-(all-trans-polyprenyl)benzene-1,4-diol + AH2 + O2 = a 3-demethylubiquinol + A + H2O. Its pathway is cofactor biosynthesis; ubiquinone biosynthesis. Its function is as follows. Catalyzes the hydroxylation of 2-nonaprenyl-3-methyl-6-methoxy-1,4-benzoquinol during ubiquinone biosynthesis. This Burkholderia mallei (strain NCTC 10229) protein is 3-demethoxyubiquinol 3-hydroxylase.